Reading from the N-terminus, the 330-residue chain is Glycerol-3-phosphate dehydrogenase [NAD(P)+] (330 aa).

Residues Trp-11, Arg-31, His-32, and Lys-105 each coordinate NADPH. Sn-glycerol 3-phosphate is bound by residues Lys-105 and Gly-133. Ala-137 contributes to the NADPH binding site. Lys-188, Asp-241, Ser-251, Arg-252, and Asn-253 together coordinate sn-glycerol 3-phosphate. Catalysis depends on Lys-188, which acts as the Proton acceptor. Position 252 (Arg-252) interacts with NADPH. Residues Leu-277 and Glu-279 each contribute to the NADPH site.

This sequence belongs to the NAD-dependent glycerol-3-phosphate dehydrogenase family.

It is found in the cytoplasm. It carries out the reaction sn-glycerol 3-phosphate + NAD(+) = dihydroxyacetone phosphate + NADH + H(+). It catalyses the reaction sn-glycerol 3-phosphate + NADP(+) = dihydroxyacetone phosphate + NADPH + H(+). It participates in membrane lipid metabolism; glycerophospholipid metabolism. In terms of biological role, catalyzes the reduction of the glycolytic intermediate dihydroxyacetone phosphate (DHAP) to sn-glycerol 3-phosphate (G3P), the key precursor for phospholipid synthesis. The chain is Glycerol-3-phosphate dehydrogenase [NAD(P)+] from Orientia tsutsugamushi (strain Boryong) (Rickettsia tsutsugamushi).